A 347-amino-acid polypeptide reads, in one-letter code: MADAADSSMALVHSSLADSVLTSPRTLRQGQKWEVEYARYFGTPRRDPTAAPPSGLRYIMRGVHRHQGTWIPASCPASLCVCHPSLPSAVPVLTISIGDVVFEEHFVSILNFSWPQVTCVTQCPIRGSRVVFVSFCDKFKQIQKFAVRFPQPCDAESFLSCVECSCGSSGTMDIIPFGSDYVCEDSSASEYIVSNGLHHRLDDASNLEEQCFDHTIDEPPMNYHEETDQHVLEPLSASNTSNNSAFPPSFNQMLKSCSIDYDQEEPCPLAASNHVLQEVYVLDTSHDVANEERTAGKGMDAAEGVDASILTYDLMARIKTYMADESFNDMLLKLDKAIDELGGDMSL.

The protein localises to the cytoplasm. Required for accurate chromosome segregation in meiosis. Required for pairing to occur between homologous chromosomes. Acts in early recombination steps and ensures pairing fidelity and proper repair of meiotic DNA double-strand-breaks. Regulates recombination and pairing of homologous chromosomes during meiotic prophase by controlling transport of RAD50 from cytoplasm to the nucleus. May affect pairing of the gene-rich fraction of the genome rather than preventing pairing between repetitive DNA elements. In Zea mays (Maize), this protein is Protein POOR HOMOLOGOUS SYNAPSIS 1.